The chain runs to 123 residues: Small ribosomal subunit protein uS12 (123 aa).

Residue Asp-89 is modified to 3-methylthioaspartic acid.

This sequence belongs to the universal ribosomal protein uS12 family. As to quaternary structure, part of the 30S ribosomal subunit. Contacts proteins S8 and S17. May interact with IF1 in the 30S initiation complex.

Its function is as follows. With S4 and S5 plays an important role in translational accuracy. In terms of biological role, interacts with and stabilizes bases of the 16S rRNA that are involved in tRNA selection in the A site and with the mRNA backbone. Located at the interface of the 30S and 50S subunits, it traverses the body of the 30S subunit contacting proteins on the other side and probably holding the rRNA structure together. The combined cluster of proteins S8, S12 and S17 appears to hold together the shoulder and platform of the 30S subunit. This Maridesulfovibrio salexigens (strain ATCC 14822 / DSM 2638 / NCIMB 8403 / VKM B-1763) (Desulfovibrio salexigens) protein is Small ribosomal subunit protein uS12.